Here is a 297-residue protein sequence, read N- to C-terminus: MSWIERILGRTSSSSSSSKSKVPEGVWTKCTSCEQVLYSEELKRNMHVCPKCNHHMRFDARTRLLSLLDQDSAQEIAAELEPQDVLKFKDLKKYKDRLTAAQKQTGEKDSFITMYGTLHNMPVVVASFNFEFMGGSMGSVVGAKFVRAAERALADNIPFICFSASGGARMQEALFSLMQMAKTSAILAKMREKGVPFISVLTDPTLGGVSASLAMLGDINIAEPKALIGFAGPRVIEQTVREKLPEGFQRAEFLLEHGAIDMIVQRKDMRDTLARLCAKMTNKPTPFKTAELIVEEA.

The interval 1–23 is disordered; that stretch reads MSWIERILGRTSSSSSSSKSKVP. A CoA carboxyltransferase N-terminal domain is found at 26 to 295; it reads VWTKCTSCEQ…PFKTAELIVE (270 aa). The Zn(2+) site is built by Cys30, Cys33, Cys49, and Cys52. The C4-type zinc finger occupies 30–52; the sequence is CTSCEQVLYSEELKRNMHVCPKC.

This sequence belongs to the AccD/PCCB family. As to quaternary structure, acetyl-CoA carboxylase is a heterohexamer composed of biotin carboxyl carrier protein (AccB), biotin carboxylase (AccC) and two subunits each of ACCase subunit alpha (AccA) and ACCase subunit beta (AccD). It depends on Zn(2+) as a cofactor.

Its subcellular location is the cytoplasm. It carries out the reaction N(6)-carboxybiotinyl-L-lysyl-[protein] + acetyl-CoA = N(6)-biotinyl-L-lysyl-[protein] + malonyl-CoA. It participates in lipid metabolism; malonyl-CoA biosynthesis; malonyl-CoA from acetyl-CoA: step 1/1. Component of the acetyl coenzyme A carboxylase (ACC) complex. Biotin carboxylase (BC) catalyzes the carboxylation of biotin on its carrier protein (BCCP) and then the CO(2) group is transferred by the transcarboxylase to acetyl-CoA to form malonyl-CoA. The polypeptide is Acetyl-coenzyme A carboxylase carboxyl transferase subunit beta (Actinobacillus pleuropneumoniae serotype 7 (strain AP76)).